A 281-amino-acid chain; its full sequence is uncharacterized protein (281 aa).

Helical transmembrane passes span 30 to 50, 54 to 74, 76 to 96, 106 to 126, 153 to 173, 198 to 218, 235 to 255, and 259 to 279; these read AIVA…FIVI, VFIS…GYYF, FNPL…MGWV, TLIG…IDLT, AGLD…FLAI, IALT…IALL, MMAV…ALSY, and LSSG…SLAF.

It belongs to the ABC-3 integral membrane protein family.

The protein localises to the cell membrane. This is an uncharacterized protein from Synechocystis sp. (strain ATCC 27184 / PCC 6803 / Kazusa).